The sequence spans 153 residues: MGKIACITGPPGAGKSTVCSKLREYGYNCKEGNELAKEYGCLFDEEVDVECLEEKLAEDRFDGIICSHYSHLLGCSTVFILEADLNDLIDRMRARGYSEEKIQENIETQMSSIFYYESLERLPANRIFTLYNGNIDETAKRIISIIERSRNNK.

Residues G12, G14, K15, S16, and T17 each contribute to the ATP site. An NMP region spans residues 31 to 47 (EGNELAKEYGCLFDEEV). Residues 94–104 (ARGYSEEKIQE) form an LID region. Residue R95 participates in ATP binding.

It belongs to the adenylate kinase family. AK6 subfamily. Interacts with uS11. Not a structural component of 40S pre-ribosomes, but transiently interacts with them by binding to uS11.

The catalysed reaction is AMP + ATP = 2 ADP. It carries out the reaction ATP + H2O = ADP + phosphate + H(+). Broad-specificity nucleoside monophosphate (NMP) kinase that catalyzes the reversible transfer of the terminal phosphate group between nucleoside triphosphates and monophosphates. Also has ATPase activity. Involved in the late maturation steps of the 30S ribosomal particles, specifically 16S rRNA maturation. While NMP activity is not required for ribosome maturation, ATPase activity is. Associates transiently with small ribosomal subunit protein uS11. ATP hydrolysis breaks the interaction with uS11. May temporarily remove uS11 from the ribosome to enable a conformational change of the ribosomal RNA that is needed for the final maturation step of the small ribosomal subunit. The sequence is that of Putative adenylate kinase from Thermoplasma volcanium (strain ATCC 51530 / DSM 4299 / JCM 9571 / NBRC 15438 / GSS1).